Consider the following 78-residue polypeptide: Ubiquinol-cytochrome-c reductase complex assembly factor 3 (78 aa).

At 1 to 5 the chain is on the mitochondrial matrix side; it reads MSGMR. Residues 6 to 26 form a helical membrane-spanning segment; sequence ILTGSVALGGLTYAIWIIFSP. Topologically, residues 27–78 are mitochondrial intermembrane; sequence GEERKKEILKSLPEANPVRMEETRKRNAIMLQVLKDAAETNDNIARGFGSQK.

The protein belongs to the UQCC3 family. As to quaternary structure, associates with the ubiquinol-cytochrome c reductase complex (mitochondrial respiratory chain complex III or cytochrome b-c1 complex).

It is found in the mitochondrion inner membrane. In terms of biological role, required for the assembly of the ubiquinol-cytochrome c reductase complex (mitochondrial respiratory chain complex III or cytochrome b-c1 complex), mediating cytochrome b recruitment and probably stabilization within the complex. Thereby, plays an important role in ATP production by mitochondria. Cardiolipin-binding protein, it may also control the cardiolipin composition of mitochondria membranes and their morphology. This chain is Ubiquinol-cytochrome-c reductase complex assembly factor 3, found in Danio rerio (Zebrafish).